The following is a 195-amino-acid chain: CASP-like protein 1E2 (195 aa).

Topologically, residues 1 to 29 (MEVESKTSFGGMESKSKEVKVVTGGKLRP) are cytoplasmic. The helical transmembrane segment at 30-50 (FDLVLRVVALALTLVAAVLLG) threads the bilayer. Over 51-82 (VDKQTKVVSLQLLPTLPPMDVPVTAKWRYLSA) the chain is Extracellular. Residues 83-103 (FVYFVVSNAIACSYAALSLLL) traverse the membrane as a helical segment. The Cytoplasmic portion of the chain corresponds to 104 to 122 (SVGNSKGNKGLGLAITVMD). Residues 123–143 (LVMVALLFSSNGAAGAIGLMG) traverse the membrane as a helical segment. At 144–165 (YEGNSRVRWGKVCNVFGKFCNQ) the chain is on the extracellular side. A helical transmembrane segment spans residues 166–186 (VAVALGLSFFGGLAFFLLVVM). Over 187–195 (AAFALNKRH) the chain is Cytoplasmic.

The protein belongs to the Casparian strip membrane proteins (CASP) family. As to quaternary structure, homodimer and heterodimers.

The protein localises to the cell membrane. The sequence is that of CASP-like protein 1E2 from Vitis vinifera (Grape).